Here is a 139-residue protein sequence, read N- to C-terminus: D-ribose pyranase (139 aa).

Catalysis depends on His-20, which acts as the Proton donor. Residues Asp-28, His-106, and 128 to 130 (YAN) each bind substrate.

The protein belongs to the RbsD / FucU family. RbsD subfamily. Homodecamer.

The protein resides in the cytoplasm. The enzyme catalyses beta-D-ribopyranose = beta-D-ribofuranose. The protein operates within carbohydrate metabolism; D-ribose degradation; D-ribose 5-phosphate from beta-D-ribopyranose: step 1/2. Functionally, catalyzes the interconversion of beta-pyran and beta-furan forms of D-ribose. This Enterobacter sp. (strain 638) protein is D-ribose pyranase.